The chain runs to 682 residues: Nisin leader peptide-processing serine protease NisP (682 aa).

The signal sequence occupies residues 1-22 (MKKILGFLFIVCSLGLSATVHG). The propeptide occupies 23–195 (ETTNSQQLLS…RKAKEVVSLR (173 aa)). A Peptidase S8 domain is found at 231–566 (QWDMKYVTNN…VDLLNGKNKA (336 aa)). Catalysis depends on charge relay system residues Asp-259, His-306, and Ser-512. Residues 652–656 (LPVTG) carry the LPXTG sorting signal motif. Thr-655 carries the pentaglycyl murein peptidoglycan amidated threonine modification. Positions 656–682 (GDGEDFLPALGIVCISILGILKRKTKN) are cleaved as a propeptide — removed by sortase.

The protein belongs to the peptidase S8 family.

Its subcellular location is the secreted. It localises to the cell wall. It functions in the pathway antibiotic biosynthesis; nisin biosynthesis. Its function is as follows. Cleaves the lantibiotic nisin precursor peptide. The protein is Nisin leader peptide-processing serine protease NisP (nisP) of Lactococcus lactis subsp. lactis (Streptococcus lactis).